Here is a 178-residue protein sequence, read N- to C-terminus: ATP synthase subunit delta (178 aa).

This sequence belongs to the ATPase delta chain family. In terms of assembly, F-type ATPases have 2 components, F(1) - the catalytic core - and F(0) - the membrane proton channel. F(1) has five subunits: alpha(3), beta(3), gamma(1), delta(1), epsilon(1). F(0) has three main subunits: a(1), b(2) and c(10-14). The alpha and beta chains form an alternating ring which encloses part of the gamma chain. F(1) is attached to F(0) by a central stalk formed by the gamma and epsilon chains, while a peripheral stalk is formed by the delta and b chains.

The protein resides in the cell inner membrane. In terms of biological role, f(1)F(0) ATP synthase produces ATP from ADP in the presence of a proton or sodium gradient. F-type ATPases consist of two structural domains, F(1) containing the extramembraneous catalytic core and F(0) containing the membrane proton channel, linked together by a central stalk and a peripheral stalk. During catalysis, ATP synthesis in the catalytic domain of F(1) is coupled via a rotary mechanism of the central stalk subunits to proton translocation. Its function is as follows. This protein is part of the stalk that links CF(0) to CF(1). It either transmits conformational changes from CF(0) to CF(1) or is implicated in proton conduction. This Thioalkalivibrio sulfidiphilus (strain HL-EbGR7) protein is ATP synthase subunit delta.